The following is a 426-amino-acid chain: Pregnancy-specific beta-1-glycoprotein 9 (426 aa).

A signal peptide spans 1-34 (MGPLPAPSCTQRITWKGLLLTASLLNFWNPPTTA). Residues 35–144 (EVTIEAQPPK…IRHFTFTLYL (110 aa)) enclose the Ig-like V-type domain. Residues Asn104 and Asn111 are each glycosylated (N-linked (GlcNAc...) asparagine). The short motif at 127-129 (RGD) is the Cell attachment site element. 3 Ig-like C2-type domains span residues 147–234 (PKPY…VTLN), 242–326 (PYIT…PVIL), and 335–410 (PRIY…KSMT). 3 disulfide bridges follow: Cys169/Cys217, Cys262/Cys310, and Cys354/Cys394. 4 N-linked (GlcNAc...) asparagine glycosylation sites follow: Asn199, Asn268, Asn303, and Asn387.

The protein belongs to the immunoglobulin superfamily. CEA family. As to quaternary structure, interacts with latency-associated peptide; leading to TGFB1 activation.

Its subcellular location is the secreted. Its function is as follows. Binds to the small latent transforming growth factor-beta complex, consisting of the N-terminal TGFB1 latency-associated peptide (LAP) and the mature form of TGFB1, thereby leading to the activation of TGFB1. The activation of TGFB1 leads to stimulation of naive CD4(+) T-cells to increase FoxP3 expression and to an increase in the number of FoxP3(+) regulatory T-cells. Induces the differentiation of a suppressive CD4(+)LAP(+)FoxP3(-) T-cell subset. Induces the secretion of TGFB1 in macrophages, but not in activated CD4(+) T-cells. May reduce the expression of several pro-inflammatory cytokines and chemokines by CD4(+) T-cells, including IL2 and IL6. This Homo sapiens (Human) protein is Pregnancy-specific beta-1-glycoprotein 9 (PSG9).